We begin with the raw amino-acid sequence, 705 residues long: Polyribonucleotide nucleotidyltransferase (705 aa).

Residues D486 and D492 each coordinate Mg(2+). One can recognise a KH domain in the interval 553 to 612 (PRIHTIRINPDKIKDVIGKGGSVIRALTEETGTTIEIEDDGTVKIAATDGEKAKFAIRRI). In terms of domain architecture, S1 motif spans 622-690 (GRIYQGKVTR…RQGRVRLSIK (69 aa)).

Belongs to the polyribonucleotide nucleotidyltransferase family. In terms of assembly, component of the RNA degradosome, which is a multiprotein complex involved in RNA processing and mRNA degradation. Requires Mg(2+) as cofactor.

The protein localises to the cytoplasm. The catalysed reaction is RNA(n+1) + phosphate = RNA(n) + a ribonucleoside 5'-diphosphate. In terms of biological role, involved in mRNA degradation. Catalyzes the phosphorolysis of single-stranded polyribonucleotides processively in the 3'- to 5'-direction. The sequence is that of Polyribonucleotide nucleotidyltransferase from Serratia proteamaculans (strain 568).